Here is a 63-residue protein sequence, read N- to C-terminus: MKASELRSKDAAELGKELESLLKAQFGLRMQKATQQLANTSQLRNVRRDIARVRTLLTEKAGK.

This sequence belongs to the universal ribosomal protein uL29 family.

The sequence is that of Large ribosomal subunit protein uL29 from Bordetella pertussis (strain Tohama I / ATCC BAA-589 / NCTC 13251).